Reading from the N-terminus, the 88-residue chain is MANTAQARKRARQAVKQNEHNSSLRSKLRTSIKAVRKAIETGDKAAAAKVFAATQATIDKIADKKIAHKNTASRQKSRLSAAIKAMAA.

Disordered regions lie at residues M1–R29 and K69–A88.

Belongs to the bacterial ribosomal protein bS20 family.

Functionally, binds directly to 16S ribosomal RNA. The polypeptide is Small ribosomal subunit protein bS20 (Polynucleobacter asymbioticus (strain DSM 18221 / CIP 109841 / QLW-P1DMWA-1) (Polynucleobacter necessarius subsp. asymbioticus)).